The chain runs to 239 residues: Probable transcriptional regulatory protein BLi00754/BL02339 (239 aa).

The protein belongs to the TACO1 family. YeeN subfamily.

It is found in the cytoplasm. The sequence is that of Probable transcriptional regulatory protein BLi00754/BL02339 from Bacillus licheniformis (strain ATCC 14580 / DSM 13 / JCM 2505 / CCUG 7422 / NBRC 12200 / NCIMB 9375 / NCTC 10341 / NRRL NRS-1264 / Gibson 46).